The primary structure comprises 397 residues: Calponin-like protein clik-2 (397 aa).

Calponin-like repeat units lie at residues 29-54 (LSQQ…RWNI), 73-98 (LRVQ…RFQV), 119-144 (IPKQ…RNQV), 161-189 (LCFQ…RQAT), 209-234 (TPWY…RDVL), and 255-280 (VPLQ…RNTQ). Positions 301 to 397 (EETKPPGSAS…EEEEEEEEDE (97 aa)) are disordered. Residues 321–332 (KFEERESSRQSE) show a composition bias toward basic and acidic residues. 2 stretches are compositionally biased toward acidic residues: residues 344–360 (VEPE…EEKI) and 367–397 (EEEE…EEDE).

This sequence belongs to the calponin family. Expressed in pharyngeal muscle cells (at protein level).

In terms of biological role, required for pharyngeal pumping. The sequence is that of Calponin-like protein clik-2 from Caenorhabditis elegans.